Reading from the N-terminus, the 265-residue chain is Chanoclavine-I dehydrogenase easD (265 aa).

Residues 1–20 form the signal peptide; sequence MSFVSSKIFAITGGASGIGA. I18, D66, R132, Y169, K173, and T205 together coordinate NADP(+). Y169 serves as the catalytic Proton donor. The active-site Lowers pKa of active site Tyr is K173.

This sequence belongs to the short-chain dehydrogenases/reductases (SDR) family. In terms of assembly, homotetramer.

It carries out the reaction chanoclavine-I + NAD(+) = chanoclavine-I aldehyde + NADH + H(+). It functions in the pathway alkaloid biosynthesis; ergot alkaloid biosynthesis. Its function is as follows. Chanoclavine-I dehydrogenase; part of the gene cluster that mediates the biosynthesis of fungal ergot alkaloid. DmaW catalyzes the first step of ergot alkaloid biosynthesis by condensing dimethylallyl diphosphate (DMAP) and tryptophan to form 4-dimethylallyl-L-tryptophan. The second step is catalyzed by the methyltransferase easF that methylates 4-dimethylallyl-L-tryptophan in the presence of S-adenosyl-L-methionine, resulting in the formation of 4-dimethylallyl-L-abrine. The catalase easC and the FAD-dependent oxidoreductase easE then transform 4-dimethylallyl-L-abrine to chanoclavine-I which is further oxidized by easD in the presence of NAD(+), resulting in the formation of chanoclavine-I aldehyde. Chanoclavine-I aldehyde is the precursor of ergoamides and ergopeptines in Clavicipitaceae, and clavine-type alcaloids such as fumiclavine in Trichocomaceae. However, the metabolites downstream of chanoclavine-I aldehyde in Arthrodermataceae have not been identified yet. The chain is Chanoclavine-I dehydrogenase easD from Trichophyton verrucosum (strain HKI 0517).